A 22-amino-acid chain; its full sequence is Mu-conotoxin SxIIIA (22 aa).

Intrachain disulfides connect cysteine 2–cysteine 15, cysteine 3–cysteine 20, and cysteine 10–cysteine 21. Alanine 22 is subject to Alanine amide.

The protein belongs to the conotoxin M superfamily. As to expression, expressed by the venom duct.

The protein localises to the secreted. Its function is as follows. Mu-conotoxins block voltage-gated sodium channels (Nav). This synthetic toxin potently blocks rNav1.4/SCN4A (IC(50)= 7 nM). It also moderately blocks rNav1.1/SCN1A (IC(50)=370 nM), rNav1.2/SCN2A (IC(50)=1 uM), and mNav1.6/SCN6A (IC(50)=570 nM). It is noteworthy that coexpression of subunits beta-2 or beta-4 (but not beta-1 or beta-3) decrease by more that 10-fold the binding potency of the toxin to rNav1.6. It is also noteworthy that the toxin is 50-fold more potent on mouse Nav1.6 than on rat Nav1.6. In vivo, when injected intraperitoneally or subcutaneously in mice, causes motor impairment, paralysis and death. This Conus striolatus (Cone snail) protein is Mu-conotoxin SxIIIA.